The primary structure comprises 78 residues: Large ribosomal subunit protein bL28 (78 aa).

This sequence belongs to the bacterial ribosomal protein bL28 family.

The sequence is that of Large ribosomal subunit protein bL28 from Histophilus somni (strain 129Pt) (Haemophilus somnus).